We begin with the raw amino-acid sequence, 329 residues long: Ribonucleoside-diphosphate reductase small chain (329 aa).

Residues Asp75, Glu106, and His109 each coordinate Fe cation. Residue Tyr113 is part of the active site. Fe cation is bound by residues Glu168, Glu202, and His205.

It belongs to the ribonucleoside diphosphate reductase small chain family. Heterodimer of a large and a small chain. Requires Fe cation as cofactor.

It localises to the cytoplasm. It carries out the reaction a 2'-deoxyribonucleoside 5'-diphosphate + [thioredoxin]-disulfide + H2O = a ribonucleoside 5'-diphosphate + [thioredoxin]-dithiol. Its function is as follows. Provides the precursors necessary for DNA synthesis. Catalyzes the biosynthesis of deoxyribonucleotides from the corresponding ribonucleotides. This is Ribonucleoside-diphosphate reductase small chain from Nicotiana tabacum (Common tobacco).